Reading from the N-terminus, the 92-residue chain is 11 kDa excretory-secretory protein (92 aa).

The sequence is that of 11 kDa excretory-secretory protein from Trichostrongylus colubriformis (Black scour worm).